Reading from the N-terminus, the 1165-residue chain is MPNSVLWAVDLFGRVYTLSTAGQYWELCKDSQLEFKRVSATTQCCWGIACDNQVYVYVCASDVPIRRREEAYENQRWNPVGGFCEKLLLSDRWAWSDVSGLQHRPLDGVALPSPHWEWESDWYVDENFGGEPTEKGGWTYAIDFPATYTKEKKWNSCVRRRKWIRYRRYKSRDIWAKIPSKDDPKELPDPFNDLSVGGWEIAEEPVGRLSVWAVSLQGKVWYREDVSHSNPEGSSWSLLDTPGEVVQISCGPHDLLWATLWEGQALVREGINRSNPKGSSWSIVEPPGSDNGIMHVSVGVSVVWAVTKDWKVWFRRGINSHNPCGTSWIEMVGEMTMVNVGMNDQVWGIGCEDRAVYFRQGVTPSELSGKTWKAIVAARECDRSHSGSSSSLLSAGCFFGDEVRGSGESAPSDTDASSEVERPGPGQTLPAEPLDDSKNAMENSASGPGAGRTTEDTVEDACPAEGSREARPNTHPGPATTPAELPWTNIDLKEPKKVPSHSAAGFPETTSLSSLGLFPLGLEEPYGVDDHPLRAWVSGGGCMVEACAVPRWFTVQAGLSSSVHMLSLSITPAQTAAWRKQIFQQLTERTKRELENFRHYEQAVEQSVWVKTGALQWWCDWKPHKWVDVRVALEQFTGHDGARDSILFIYYVVHEEKKYIHIFLNEVVALVPVLNETKHSFALYTPERTRQRWPVRLAAATEQDMNDWLALLSLSCCESRKVQGRPSPQAIWSITCKGDIFVSEPSPDLEAHEHPLPCDQMFWRQMGGHLRMVEANSRGVVWGIGYDHTAWVYTGGYGGGCFQGLASSTSNIYMQSDVKCVHIYENQRWNPVTGYTSRGLPTDRYMWSDASGLQECTKAGTKPPSLQWAWVSDWFVDFSVPGGTDQEGWQYASDFPASYHGSKTMKDFVRRRCRARKCKLVTSGPWLEVPPIALRDVSIIPESPGAEGSGHSIALWAVSDKGDVLCRLGVSELNPAGSSWLHVGTDQPFTSISIGACYQVWAVARDGSTFYRGSVYPSQPAGDCWYHIPSPPRQRLKQVSVGQTSVYALDENGNLWYRQGITPSYPQGSSWEHVSNNVCRVSVGPLDQVWVIADKVQGSHSLSRGTVCHRTGVQPHEPKGHGWDYGIGGGWDHISVRANATRAPRSSSQEQEPSAPPEAHDPVCC.

4 TECPR repeats span residues 209-240 (LSVW…SLLD), 254-285 (DLLW…SIVE), 301-332 (SVVW…IEMV), and 344-376 (DQVW…KAIV). Residues 404–486 (RGSGESAPSD…GPATTPAELP (83 aa)) form a disordered region. The 107-residue stretch at 611-717 (KTGALQWWCD…WLALLSLSCC (107 aa)) folds into the PH domain. The TECPR 5 repeat unit spans residues 729-756 (QAIWSITCKGDIFVSEPSPDLEAHEHPL). Serine 938 and serine 949 each carry phosphoserine. 4 TECPR repeats span residues 953–984 (IALW…LHVG), 998–1029 (YQVW…YHIP), 1044–1075 (TSVY…EHVS), and 1087–1127 (DQVW…DYGI). Residues 1140–1165 (ATRAPRSSSQEQEPSAPPEAHDPVCC) are disordered. Residues 1143–1153 (APRSSSQEQEP) are compositionally biased toward low complexity.

The protein belongs to the TECPR1 family. As to quaternary structure, interacts with ATG5; the interaction is direct. Interacts with WIPI2. Interacts with the ATG5-ATG12 conjugate, the interaction is however mutually exclusive with ATG16, since it does not interact with ATG12-ATG5-ATG16 complex.

The protein localises to the cytoplasmic vesicle. The protein resides in the autophagosome membrane. Its subcellular location is the lysosome membrane. Tethering factor involved in autophagy. Involved in autophagosome maturation by promoting the autophagosome fusion with lysosomes: acts by associating with both the ATG5-ATG12 conjugate and phosphatidylinositol-3-phosphate (PtdIns(3)P) present at the surface of autophagosomes. Also involved in selective autophagy against bacterial pathogens, by being required for phagophore/preautophagosomal structure biogenesis and maturation. The sequence is that of Tectonin beta-propeller repeat-containing protein 1 (TECPR1) from Pongo abelii (Sumatran orangutan).